The chain runs to 318 residues: Nodulation protein D (318 aa).

The region spanning 6-63 (LDLNLLVALDALMTERKLTAAARSINLSQPAMSAAIGRLRAYFNDELFLMQQRRLVPT) is the HTH lysR-type domain. Residues 23 to 42 (LTAAARSINLSQPAMSAAIG) constitute a DNA-binding region (H-T-H motif).

The protein belongs to the LysR transcriptional regulatory family.

Its function is as follows. NodD regulates the expression of the nodABCFE genes which encode other nodulation proteins. NodD is also a negative regulator of its own expression. Binds flavonoids as inducers. In Rhizobium leguminosarum bv. trifolii, this protein is Nodulation protein D (nodD).